Here is a 341-residue protein sequence, read N- to C-terminus: HTH-type transcriptional repressor PurR (341 aa).

An HTH lacI-type domain is found at 2 to 56 (ATIKDVAKHAGVSTTTVSHVINKTRFVAENTKAAVWAAIKELHYSPSAVARSLKV). The H-T-H motif DNA-binding region spans 4–23 (IKDVAKHAGVSTTTVSHVIN). Residues 48–56 (SAVARSLKV) mediate DNA binding. Tyr-73, Arg-190, Thr-192, Phe-221, and Asp-275 together coordinate hypoxanthine.

Homodimer.

It functions in the pathway purine metabolism; purine nucleotide biosynthesis [regulation]. Functionally, is the main repressor of the genes involved in the de novo synthesis of purine nucleotides, regulating purB, purC, purEK, purF, purHD, purL, purMN and guaBA expression. PurR is allosterically activated to bind its cognate DNA by binding the purine corepressors, hypoxanthine or guanine, thereby effecting transcription repression. The sequence is that of HTH-type transcriptional repressor PurR from Yersinia enterocolitica serotype O:8 / biotype 1B (strain NCTC 13174 / 8081).